The sequence spans 170 residues: Lipoprotein signal peptidase (170 aa).

5 helical membrane-spanning segments follow: residues 13–33 (IFIS…VTYV), 72–92 (LFFL…SLKE), 96–113 (VSRF…GNII), 116–136 (LFRP…IFGL), and 142–162 (FNFA…YDLF). Active-site residues include aspartate 124 and aspartate 146.

It belongs to the peptidase A8 family.

It is found in the cell inner membrane. It catalyses the reaction Release of signal peptides from bacterial membrane prolipoproteins. Hydrolyzes -Xaa-Yaa-Zaa-|-(S,diacylglyceryl)Cys-, in which Xaa is hydrophobic (preferably Leu), and Yaa (Ala or Ser) and Zaa (Gly or Ala) have small, neutral side chains.. It functions in the pathway protein modification; lipoprotein biosynthesis (signal peptide cleavage). Its function is as follows. This protein specifically catalyzes the removal of signal peptides from prolipoproteins. The chain is Lipoprotein signal peptidase from Borrelia duttonii (strain Ly).